The chain runs to 318 residues: MFMANLLLVILPALVAMAFLTLTERKVLGYMQFRKGPNIVGPYGMLQPFADAMKLFTKEPLLPTTSTSMLYLTAPALALSIALLLWTPLPMPXPLMNFNLGLLFILATSSLAVYSILWSGWASNSNYALIGALRAVAQTISYEVTLAIILLSVLLMSGSFNLQSLITTQEHSWLLFPSWPLAMMWFTSTLAETNRAPXDLTEGESELVSGFNIEYAXGSFALFFMGEYMNIIMMNALTTTIFLAASYNMMTPETYSINFMAKALLLTTLFLWIRAAYPRFRYDQLMHLLWKNFLPLTLALCMWYISMPTLTSSIPPQM.

8 helical membrane passes run 2-22 (FMAN…FLTL), 69-89 (MLYL…WTPL), 98-118 (FNLG…SILW), 140-160 (ISYE…SGSF), 171-191 (HSWL…STLA), 222-242 (LFFM…TTIF), 253-273 (ETYS…FLWI), and 285-305 (LMHL…MWYI).

Belongs to the complex I subunit 1 family. As to quaternary structure, core subunit of respiratory chain NADH dehydrogenase (Complex I) which is composed of 45 different subunits.

It localises to the mitochondrion inner membrane. It catalyses the reaction a ubiquinone + NADH + 5 H(+)(in) = a ubiquinol + NAD(+) + 4 H(+)(out). Functionally, core subunit of the mitochondrial membrane respiratory chain NADH dehydrogenase (Complex I) which catalyzes electron transfer from NADH through the respiratory chain, using ubiquinone as an electron acceptor. Essential for the catalytic activity and assembly of complex I. The sequence is that of NADH-ubiquinone oxidoreductase chain 1 (MT-ND1) from Saguinus leucopus (Silvery-brown bare-face tamarin).